The sequence spans 456 residues: CCA-adding enzyme (456 aa).

The ATP site is built by serine 53 and lysine 56. CTP-binding residues include serine 53 and lysine 56. Residues aspartate 65, aspartate 67, and aspartate 119 each contribute to the Mg(2+) site. Histidine 142, lysine 161, and tyrosine 170 together coordinate ATP. Residues histidine 142, lysine 161, and tyrosine 170 each coordinate CTP.

It belongs to the tRNA nucleotidyltransferase/poly(A) polymerase family. Archaeal CCA-adding enzyme subfamily. As to quaternary structure, homodimer. Requires Mg(2+) as cofactor.

The catalysed reaction is a tRNA precursor + 2 CTP + ATP = a tRNA with a 3' CCA end + 3 diphosphate. It carries out the reaction a tRNA with a 3' CCA end + 2 CTP + ATP = a tRNA with a 3' CCACCA end + 3 diphosphate. In terms of biological role, catalyzes the addition and repair of the essential 3'-terminal CCA sequence in tRNAs without using a nucleic acid template. Adds these three nucleotides in the order of C, C, and A to the tRNA nucleotide-73, using CTP and ATP as substrates and producing inorganic pyrophosphate. tRNA 3'-terminal CCA addition is required both for tRNA processing and repair. Also involved in tRNA surveillance by mediating tandem CCA addition to generate a CCACCA at the 3' terminus of unstable tRNAs. While stable tRNAs receive only 3'-terminal CCA, unstable tRNAs are marked with CCACCA and rapidly degraded. In Thermococcus kodakarensis (strain ATCC BAA-918 / JCM 12380 / KOD1) (Pyrococcus kodakaraensis (strain KOD1)), this protein is CCA-adding enzyme.